Here is a 344-residue protein sequence, read N- to C-terminus: Biotin synthase (344 aa).

The 228-residue stretch at 40–267 folds into the Radical SAM core domain; it reads AQVQVSTLLS…KSMVRLSAGR (228 aa). [4Fe-4S] cluster is bound by residues cysteine 55, cysteine 59, and cysteine 62. Cysteine 99, cysteine 130, cysteine 190, and arginine 262 together coordinate [2Fe-2S] cluster.

The protein belongs to the radical SAM superfamily. Biotin synthase family. As to quaternary structure, homodimer. It depends on [4Fe-4S] cluster as a cofactor. The cofactor is [2Fe-2S] cluster.

The enzyme catalyses (4R,5S)-dethiobiotin + (sulfur carrier)-SH + 2 reduced [2Fe-2S]-[ferredoxin] + 2 S-adenosyl-L-methionine = (sulfur carrier)-H + biotin + 2 5'-deoxyadenosine + 2 L-methionine + 2 oxidized [2Fe-2S]-[ferredoxin]. It functions in the pathway cofactor biosynthesis; biotin biosynthesis; biotin from 7,8-diaminononanoate: step 2/2. Functionally, catalyzes the conversion of dethiobiotin (DTB) to biotin by the insertion of a sulfur atom into dethiobiotin via a radical-based mechanism. The protein is Biotin synthase of Xanthomonas euvesicatoria pv. vesicatoria (strain 85-10) (Xanthomonas campestris pv. vesicatoria).